The following is a 643-amino-acid chain: Threonine--tRNA ligase (643 aa).

The region spanning 1–61 is the TGS domain; it reads MPIITLPDGS…EQDATLEIIT (61 aa). The tract at residues 243–534 is catalytic; sequence DHRKIGKALD…ITEEYAGFFP (292 aa). Zn(2+) is bound by residues cysteine 334, histidine 385, and histidine 511.

It belongs to the class-II aminoacyl-tRNA synthetase family. Homodimer. Requires Zn(2+) as cofactor.

The protein localises to the cytoplasm. It catalyses the reaction tRNA(Thr) + L-threonine + ATP = L-threonyl-tRNA(Thr) + AMP + diphosphate + H(+). Catalyzes the attachment of threonine to tRNA(Thr) in a two-step reaction: L-threonine is first activated by ATP to form Thr-AMP and then transferred to the acceptor end of tRNA(Thr). Also edits incorrectly charged L-seryl-tRNA(Thr). The sequence is that of Threonine--tRNA ligase from Haemophilus influenzae (strain PittGG).